A 23-amino-acid chain; its full sequence is Coenzyme PQQ synthesis protein A (23 aa).

The pyrroloquinoline quinone (Glu-Tyr) cross-link spans 15-19; it reads EVTMY.

It belongs to the PqqA family.

It participates in cofactor biosynthesis; pyrroloquinoline quinone biosynthesis. In terms of biological role, required for coenzyme pyrroloquinoline quinone (PQQ) biosynthesis. PQQ is probably formed by cross-linking a specific glutamate to a specific tyrosine residue and excising these residues from the peptide. This is Coenzyme PQQ synthesis protein A from Ectopseudomonas mendocina (strain ymp) (Pseudomonas mendocina).